The chain runs to 240 residues: Octanoyltransferase (240 aa).

The BPL/LPL catalytic domain occupies 49 to 233 (HQAEELVWLL…AFESVFGATR (185 aa)). Residues 87–94 (RGGQVTYH), 162–164 (AIG), and 175–177 (GIA) contribute to the substrate site. Residue Cys-193 is the Acyl-thioester intermediate of the active site.

This sequence belongs to the LipB family.

Its subcellular location is the cytoplasm. The catalysed reaction is octanoyl-[ACP] + L-lysyl-[protein] = N(6)-octanoyl-L-lysyl-[protein] + holo-[ACP] + H(+). It participates in protein modification; protein lipoylation via endogenous pathway; protein N(6)-(lipoyl)lysine from octanoyl-[acyl-carrier-protein]: step 1/2. Its function is as follows. Catalyzes the transfer of endogenously produced octanoic acid from octanoyl-acyl-carrier-protein onto the lipoyl domains of lipoate-dependent enzymes. Lipoyl-ACP can also act as a substrate although octanoyl-ACP is likely to be the physiological substrate. This is Octanoyltransferase from Bradyrhizobium sp. (strain ORS 278).